The chain runs to 473 residues: Cholesterol 22-monohydroxylase CYP90B52 (473 aa).

The helical transmembrane segment at 2–22 threads the bilayer; it reads EGLLLLLPTAIIALYLYISLI. Cys-422 lines the heme pocket.

The protein belongs to the cytochrome P450 family. In terms of tissue distribution, mainly expressed in leaves and roots and, at low levels, in fruits and stems.

Its subcellular location is the membrane. It catalyses the reaction cholesterol + reduced [NADPH--hemoprotein reductase] + O2 = (22S)-22-hydroxycholesterol + oxidized [NADPH--hemoprotein reductase] + H2O + H(+). It functions in the pathway steroid metabolism; cholesterol metabolism. Its function is as follows. Canonical brassinosteroid (BR)-biosynthetic enzyme capable of converting cholesterol to 22S-hydroxycholesterol via sterol-C22 hydroxylation. This Paris polyphylla (Daiswa polyphylla) protein is Cholesterol 22-monohydroxylase CYP90B52.